The chain runs to 452 residues: UDP-N-acetylmuramoylalanine--D-glutamate ligase (452 aa).

119–125 serves as a coordination point for ATP; sequence GSNGKTT.

It belongs to the MurCDEF family.

It is found in the cytoplasm. The enzyme catalyses UDP-N-acetyl-alpha-D-muramoyl-L-alanine + D-glutamate + ATP = UDP-N-acetyl-alpha-D-muramoyl-L-alanyl-D-glutamate + ADP + phosphate + H(+). Its pathway is cell wall biogenesis; peptidoglycan biosynthesis. In terms of biological role, cell wall formation. Catalyzes the addition of glutamate to the nucleotide precursor UDP-N-acetylmuramoyl-L-alanine (UMA). This is UDP-N-acetylmuramoylalanine--D-glutamate ligase from Streptococcus pyogenes serotype M12 (strain MGAS9429).